Consider the following 372-residue polypeptide: Enolase (372 aa).

Positions 95 and 104 each coordinate substrate. Catalysis depends on E147, which acts as the Proton donor. Residues D182, E232, and D257 each contribute to the Mg(2+) site. The substrate site is built by E232 and D257. The active-site Proton acceptor is the K282. Substrate is bound by residues 309 to 312 (SHRS) and K333.

Belongs to the enolase family. Homodimer. Mg(2+) is required as a cofactor.

The protein resides in the cytoplasm. It catalyses the reaction (2R)-2-phosphoglycerate = phosphoenolpyruvate + H2O. It functions in the pathway carbohydrate degradation; glycolysis; pyruvate from D-glyceraldehyde 3-phosphate: step 4/5. The chain is Enolase (ENO) from Chlamydomonas reinhardtii (Chlamydomonas smithii).